Here is a 1412-residue protein sequence, read N- to C-terminus: Probable phosphatidylinositol 4-kinase STT4 homolog (1412 aa).

The region spanning 878–1055 is the PIK helical domain; that stretch reads SMETNGFYRF…GTFVRCIEEI (178 aa). The tract at residues 1056-1163 is pleckstrin homology (PH) domain conferring phosphoinositide binding specificity; sequence MKEMPDGSRD…ISIKQLIFKS (108 aa). One can recognise a PI3K/PI4K catalytic domain in the interval 1127–1396; that stretch reads NGSARALQSH…LIAESSQKFR (270 aa). Residues 1133–1139 are G-loop; that stretch reads LQSHSKV. Residues 1266–1274 form a catalytic loop region; it reads NIKDRHNGN. The segment at 1285–1308 is activation loop; the sequence is HIDFGYMLEMSPGNLNIEAPLKLT.

The protein belongs to the PI3/PI4-kinase family. Type III PI4K subfamily.

It is found in the cytoplasm. The catalysed reaction is a 1,2-diacyl-sn-glycero-3-phospho-(1D-myo-inositol) + ATP = a 1,2-diacyl-sn-glycero-3-phospho-(1D-myo-inositol 4-phosphate) + ADP + H(+). Acts on phosphatidylinositol (PI) in the first committed step in the production of the second messenger inositol 1,4,5,-trisphosphate. The protein is Probable phosphatidylinositol 4-kinase STT4 homolog (STT4) of Encephalitozoon cuniculi (strain GB-M1) (Microsporidian parasite).